The following is a 1888-amino-acid chain: Nuclear pore membrane glycoprotein 210-like (1888 aa).

Positions 1-35 (MTGCPASSRRRGFGLFFFLRLHRLLLLFLVLRGTL) are cleaved as a signal peptide. N-linked (GlcNAc...) asparagine glycosylation is found at N84, N304, N348, N495, N522, N812, and N931. Residues 1082–1154 (FPPFRLLPEK…TIQTVNEDTG (73 aa)) form the BIG2 domain. A glycan (N-linked (GlcNAc...) asparagine) is linked at N1445. The chain crosses the membrane as a helical span at residues 1813–1833 (ILLLTLFAVLASTASIFLAYN). N1859 carries an N-linked (GlcNAc...) asparagine glycan.

It belongs to the NUP210 family.

The protein localises to the nucleus membrane. The sequence is that of Nuclear pore membrane glycoprotein 210-like (NUP210L) from Homo sapiens (Human).